The chain runs to 90 residues: Small ribosomal subunit protein uS15c (90 aa).

Belongs to the universal ribosomal protein uS15 family. Part of the 30S ribosomal subunit.

It is found in the plastid. The protein localises to the chloroplast. The chain is Small ribosomal subunit protein uS15c (rps15) from Secale cereale (Rye).